The sequence spans 45 residues: Large ribosomal subunit protein bL34 (45 aa).

It belongs to the bacterial ribosomal protein bL34 family.

This chain is Large ribosomal subunit protein bL34, found in Corynebacterium urealyticum (strain ATCC 43042 / DSM 7109).